Reading from the N-terminus, the 102-residue chain is MKIVVLGDKDTVLGFRLAGVHETYSFEDTTHEIERVRNKIMELIEREDVGVILITERLAQRVEIPDVAFPIILQIPDKYGSLYGEEQLREIVRRAIGVEIKR.

This sequence belongs to the V-ATPase F subunit family. In terms of assembly, has multiple subunits with at least A(3), B(3), C, D, E, F, H, I and proteolipid K(x).

Its subcellular location is the cell membrane. In terms of biological role, component of the A-type ATP synthase that produces ATP from ADP in the presence of a proton gradient across the membrane. The protein is A-type ATP synthase subunit F of Thermococcus sibiricus (strain DSM 12597 / MM 739).